Reading from the N-terminus, the 761-residue chain is Neurotrypsin (761 aa).

The signal sequence occupies residues 1 to 21 (MALARCVLAVILGVLSEVARA). Positions 26–88 (HSPLHRPHPS…PTISRRCGAG (63 aa)) are disordered. Residues 54-63 (TPRFPLPPRA) are compositionally biased toward pro residues. The Kringle domain occupies 85-157 (CGAGEPWGNA…GKVDWGYCDC (73 aa)). 17 disulfide bridges follow: Cys-85-Cys-157, Cys-101-Cys-141, Cys-130-Cys-155, Cys-191-Cys-255, Cys-204-Cys-265, Cys-235-Cys-245, Cys-298-Cys-361, Cys-311-Cys-371, Cys-341-Cys-351, Cys-411-Cys-475, Cys-424-Cys-485, Cys-455-Cys-465, Cys-505-Cys-636, Cys-547-Cys-563, Cys-651-Cys-717, Cys-680-Cys-694, and Cys-707-Cys-736. Residue Asn-93 is glycosylated (N-linked (GlcNAc...) asparagine). SRCR domains follow at residues 166–267 (IRLV…SCAP), 273–373 (IRLS…TCYP), and 386–487 (IRLM…ICDY). The interval 505–516 (CGLRLLHRRQKR) is zymogen activation region. Positions 517-760 (IIGGNNSLRG…FVPWIKSVTS (244 aa)) constitute a Peptidase S1 domain. Asn-521 carries N-linked (GlcNAc...) asparagine glycosylation. His-562 (charge relay system) is an active-site residue. N-linked (GlcNAc...) asparagine glycosylation is present at Asn-569. Catalysis depends on Asp-612, which acts as the Charge relay system. Catalysis depends on Ser-711, which acts as the Charge relay system.

It belongs to the peptidase S1 family.

The protein resides in the secreted. In terms of biological role, plays a role in neuronal plasticity and the proteolytic action may subserve structural reorganizations associated with learning and memory operations. This is Neurotrypsin (Prss12) from Rattus norvegicus (Rat).